A 691-amino-acid polypeptide reads, in one-letter code: Elongation factor G (691 aa).

The 275-residue stretch at 8-282 (EQTRNIGIMA…AVIDYLPAPT (275 aa)) folds into the tr-type G domain. Residues 17–24 (AHIDAGKT), 81–85 (DTPGH), and 135–138 (NKMD) contribute to the GTP site.

It belongs to the TRAFAC class translation factor GTPase superfamily. Classic translation factor GTPase family. EF-G/EF-2 subfamily.

It localises to the cytoplasm. Catalyzes the GTP-dependent ribosomal translocation step during translation elongation. During this step, the ribosome changes from the pre-translocational (PRE) to the post-translocational (POST) state as the newly formed A-site-bound peptidyl-tRNA and P-site-bound deacylated tRNA move to the P and E sites, respectively. Catalyzes the coordinated movement of the two tRNA molecules, the mRNA and conformational changes in the ribosome. The protein is Elongation factor G of Natranaerobius thermophilus (strain ATCC BAA-1301 / DSM 18059 / JW/NM-WN-LF).